A 103-amino-acid chain; its full sequence is Large ribosomal subunit protein bL21 (103 aa).

Belongs to the bacterial ribosomal protein bL21 family. Part of the 50S ribosomal subunit. Contacts protein L20.

This protein binds to 23S rRNA in the presence of protein L20. This is Large ribosomal subunit protein bL21 from Ruthia magnifica subsp. Calyptogena magnifica.